A 166-amino-acid polypeptide reads, in one-letter code: MLRSLQHVESHINQCRRISTTSTLLKNRAGKTKSTSNRTQLLTYEMAQKPHHIGVRKSWLTWHSQNLEEFRQSQPLVVAQDEVVRRFIRGFFPQNLVVSGNEIVIKRRGNVLIVAGFLQYSRRLDIRRIYWMFGFAEEFLSILLKQPVKLELSFVESEETVAYNYI.

A mitochondrion-targeting transit peptide spans methionine 1 to leucine 25.

Belongs to the universal ribosomal protein uS3 family. As to quaternary structure, component of the mitochondrial ribosome small subunit (28S) which comprises a 12S rRNA and about 30 distinct proteins.

Its subcellular location is the mitochondrion. This Caenorhabditis briggsae protein is Small ribosomal subunit protein uS3m (mrps-24).